A 512-amino-acid chain; its full sequence is Tyrosine-protein kinase Lyn (512 aa).

The disordered stretch occupies residues 1 to 45 (MGCIKSKRKDNLNDDEVDSKTQPVRNTDRTIYVRDPTSNKQQRPV). Residue Gly2 is the site of N-myristoyl glycine attachment. Cys3 is lipidated: S-palmitoyl cysteine. Position 19 is a phosphoserine (Ser19). Residues 63-123 (EQGDIVVALY…PSNYVAKVNT (61 aa)) enclose the SH3 domain. The SH2 domain maps to 129 to 226 (WFFKDITRKD…GLCRRLEKAC (98 aa)). Residue Tyr193 is modified to Phosphotyrosine. Ser228 carries the phosphoserine modification. One can recognise a Protein kinase domain in the interval 247–501 (IKLVKKLGAG…YLQSVLDDFY (255 aa)). ATP-binding positions include 253–261 (LGAGQFGEV) and Lys275. Phosphotyrosine is present on residues Tyr306 and Tyr316. The Proton acceptor role is filled by Asp367. At Tyr397 the chain carries Phosphotyrosine; by autocatalysis. Residues Tyr460 and Tyr473 each carry the phosphotyrosine modification. A Phosphotyrosine; by autocatalysis, CSK and MATK modification is found at Tyr508.

The protein belongs to the protein kinase superfamily. Tyr protein kinase family. SRC subfamily. As to quaternary structure, interacts with TEC. Interacts (via SH2 domain) with FLT3 (tyrosine phosphorylated). Interacts with LIME1 and with CD79A upon activation of the B-cell antigen receptor. Interacts with the B-cell receptor complex. Interacts with phosphorylated THEMIS2. Interacts with EPOR. Interacts with MS4A2/FCER1B. Interaction (via the SH2 and SH3 domains) with MUC1 is stimulated by IL7 and the subsequent phosphorylation increases the binding between MUC1 and CTNNB1/beta-catenin. Interacts with ADAM15. Interacts with NDFIP2 and more weakly with NDFIP1. Interacts with FASLG. Interacts with KIT. Interacts with HCLS1. Interacts with FCGR2B. Interacts with FCGR1A; the interaction may be indirect. Interacts with CD19, CD22, CD79A and CD79B. Interacts (via SH3 domain) with CBLC, PPP1R15A and PDE4A. Interacts with TGFB1I1. Interacts (via SH3 domain) with PIK3R1, the regulatory subunit of phosphatidylinositol 3-kinase; this interaction enhances phosphatidylinositol 3-kinase activity. Interacts with CSF2RB, the common subunit of the IL3, IL5 and CSF2 receptors. Interacts with PAG1; identified in a complex with PAG1 and STAT3. Interacts with ABL1. Interacts with PTPN6/SHP-1. Interacts (via SH3 domain) with SCIMP (via proline-rich region). This interaction facilitates the phosphorylation of SCIMP on 'Tyr-96', which enhances binding of SCIMP to TLR4, and consequently the phosphorylation of TLR4 in response to stimulation by lipopolysaccharide in macrophages. Interacts with LPXN (via LD motif 3) and the interaction is induced upon B-cell antigen receptor (BCR) activation. Interacts (via SH3-domain) with ANKRD54 (via ankyrin repeat region) in an activation-independent status of LYN. Forms a multiprotein complex with ANKRD54 and HCLS1. Interacts (via SH2 and SH3 domains) with UNC119; leading to LYN activation. Interacts with CD36. Interacts with LYN. Interacts with SKAP1 and FYB1; this interaction promotes the phosphorylation of CLNK. Interacts with BCAR1/CAS and NEDD9/HEF1. Ubiquitinated by CBL, leading to its degradation. In terms of processing, autophosphorylated. Phosphorylated on tyrosine residues in response to KIT signaling. Phosphorylation at Tyr-397 is required for optimal activity. Phosphorylation at Tyr-508 inhibits kinase activity. Phosphorylated at Tyr-508 by CSK. Dephosphorylated by PTPRC/CD45. Becomes rapidly phosphorylated upon activation of the B-cell receptor and the immunoglobulin receptor FCGR1A. Phosphorylated in response to ITGB1 in B-cells. In terms of tissue distribution, detected in bone marrow-derived monocytes and macrophages (at protein level). Expressed predominantly in B-lymphoid and myeloid cells.

The protein resides in the cell membrane. It is found in the nucleus. Its subcellular location is the cytoplasm. It localises to the perinuclear region. The protein localises to the golgi apparatus. The protein resides in the membrane. The enzyme catalyses L-tyrosyl-[protein] + ATP = O-phospho-L-tyrosyl-[protein] + ADP + H(+). Its activity is regulated as follows. Subject to autoinhibition, mediated by intramolecular interactions between the SH2 domain and the C-terminal phosphotyrosine. Phosphorylation at Tyr-397 is required for optimal activity. Phosphorylated by CSK at Tyr-508; phosphorylation at Tyr-508 inhibits kinase activity. Kinase activity is modulated by dephosphorylation by PTPRC/CD45. Inhibited by dasatinib, PP2, and SU6656. Functionally, non-receptor tyrosine-protein kinase that transmits signals from cell surface receptors and plays an important role in the regulation of innate and adaptive immune responses, hematopoiesis, responses to growth factors and cytokines, integrin signaling, but also responses to DNA damage and genotoxic agents. Functions primarily as negative regulator, but can also function as activator, depending on the context. Required for the initiation of the B-cell response, but also for its down-regulation and termination. Plays an important role in the regulation of B-cell differentiation, proliferation, survival and apoptosis, and is important for immune self-tolerance. Acts downstream of several immune receptors, including the B-cell receptor, CD79A, CD79B, CD5, CD19, CD22, FCER1, FCGR2, FCGR1A, TLR2 and TLR4. Plays a role in the inflammatory response to bacterial lipopolysaccharide. Mediates the responses to cytokines and growth factors in hematopoietic progenitors, platelets, erythrocytes, and in mature myeloid cells, such as dendritic cells, neutrophils and eosinophils. Acts downstream of EPOR, KIT, MPL, the chemokine receptor CXCR4, as well as the receptors for IL3, IL5 and CSF2. Plays an important role in integrin signaling. Regulates cell proliferation, survival, differentiation, migration, adhesion, degranulation, and cytokine release. Involved in the regulation of endothelial activation, neutrophil adhesion and transendothelial migration. Down-regulates signaling pathways by phosphorylation of immunoreceptor tyrosine-based inhibitory motifs (ITIM), that then serve as binding sites for phosphatases, such as PTPN6/SHP-1, PTPN11/SHP-2 and INPP5D/SHIP-1, that modulate signaling by dephosphorylation of kinases and their substrates. Phosphorylates LIME1 in response to CD22 activation. Phosphorylates BTK, CBL, CD5, CD19, CD72, CD79A, CD79B, CSF2RB, DOK1, HCLS1, MS4A2/FCER1B, SYK and TEC. Phosphorylates PIRB at Tyr-794 and Tyr-824, which is required for PIRB interaction with PTPN6/SHP-1 and PTPN11/SHP-2. Promotes phosphorylation of SIRPA, PTPN6/SHP-1, PTPN11/SHP-2 and INPP5D/SHIP-1. Required for rapid phosphorylation of FER in response to FCER1 activation. Mediates KIT phosphorylation. Acts as an effector of EPOR (erythropoietin receptor) in controlling KIT expression and may play a role in erythroid differentiation during the switch between proliferation and maturation. Depending on the context, activates or inhibits several signaling cascades. Regulates phosphatidylinositol 3-kinase activity and AKT1 activation. Regulates activation of the MAP kinase signaling cascade, including activation of MAP2K1/MEK1, MAPK1/ERK2, MAPK3/ERK1, MAPK8/JNK1 and MAPK9/JNK2. Mediates activation of STAT5A and/or STAT5B. Phosphorylates LPXN on 'Tyr-72'. Kinase activity facilitates TLR4-TLR6 heterodimerization and signal initiation. Phosphorylates SCIMP on 'Tyr-96'; this enhances binding of SCIMP to TLR4, promoting the phosphorylation of TLR4, and a selective cytokine response to lipopolysaccharide in macrophages. Phosphorylates CLNK. Phosphorylates BCAR1/CAS and NEDD9/HEF1. This is Tyrosine-protein kinase Lyn (Lyn) from Mus musculus (Mouse).